Consider the following 403-residue polypeptide: MRPNIVTEAGVQTRVGQWWNAIPFLTSSVVVVCGVIYLICLLTGYDTFYEVCFLPSAIISRFQVYRFYTAIIFHGSLLHVLFNMMALVPMGSELERIMGSVRLLYLTVLLATTNAVLHLLIASLAGYNPFYQYDHLMNECAIGFSGILFSMIVIETSLSGVTSRSVFGLFNVPAKLYPWILLIVFQLLMTNVSLLGHLCGILSGFSYSYGLFNFLMPGSSFFTTIESASWMSSFIRRPKFIMCTGGNPSSYIPTYSAQNTTSSGFSTGNAWRSLSSWLPQREASNQSSEDSRFPGRGRTLSTARDPTAPAGETDPNLHARLLEDSSSPDRLSDATVNTVADSRQAPIANAAVLPQSQGRVAASEEQIQKLVAMGFDRTQVEVALAAADDDLTVAVEILMSQQA.

5 helical membrane passes run 22–42 (IPFLTSSVVVVCGVIYLICLL), 70–90 (AIIFHGSLLHVLFNMMALVPM), 103–123 (LLYLTVLLATTNAVLHLLIAS), 141–161 (AIGFSGILFSMIVIETSLSGV), and 176–196 (LYPWILLIVFQLLMTNVSLLG). S145 acts as the Nucleophile in catalysis. The active-site Charge relay system is the H197. The helical transmembrane segment at 198-218 (LCGILSGFSYSYGLFNFLMPG) threads the bilayer. Positions 282–316 (EASNQSSEDSRFPGRGRTLSTARDPTAPAGETDPN) are disordered. Positions 361–401 (AASEEQIQKLVAMGFDRTQVEVALAAADDDLTVAVEILMSQ) constitute a UBA domain.

Belongs to the peptidase S54 family.

The protein resides in the membrane. Probable rhomboid-type serine protease that catalyzes intramembrane proteolysis. May function in senescence. The polypeptide is Rhomboid-like protein 15 (Arabidopsis thaliana (Mouse-ear cress)).